A 590-amino-acid chain; its full sequence is Myo-inositol transporter 3C (590 aa).

Residues 1 to 63 (MSRTPSSLDK…GEDKVTPYLC (63 aa)) are Cytoplasmic-facing. A helical transmembrane segment spans residues 64-86 (FLISASAIAGFLFGYDTGVVGVA). At 87 to 105 (LPLVGTDLGGSVLSSSQQE) the chain is on the extracellular side. The chain crosses the membrane as a helical span at residues 106-126 (IITAGTTIGAIFGSAILGGWG). At 127-132 (DRLGRK) the chain is on the cytoplasmic side. A helical transmembrane segment spans residues 133–153 (VAILIADVFFTVGAVLIAASY). Residues 154–162 (SVPQMIVGR) lie on the Extracellular side of the membrane. A helical membrane pass occupies residues 163–183 (IVLGVGVGGAAAIAPLFITET). At 184–192 (APTAVRGRC) the chain is on the cytoplasmic side. The chain crosses the membrane as a helical span at residues 193–213 (IGVNAFFIPFGQVISEAIGAG). The Extracellular segment spans residues 214–222 (VQDMKNGWR). The chain crosses the membrane as a helical span at residues 223–243 (LLFALGAVPSLFQLILFHYLP). Residues 244–325 (ESPRILILRG…TVSLIQMAGQ (82 aa)) lie on the Cytoplasmic side of the membrane. The chain crosses the membrane as a helical span at residues 326–346 (LSGFNTLLYYAGTLFSLLGLT). The Extracellular segment spans residues 347-349 (NPA). A helical transmembrane segment spans residues 350-370 (LGGLIPAGTNAFFVLVGMTLV). Topologically, residues 371-376 (DKVGRR) are cytoplasmic. A helical membrane pass occupies residues 377 to 397 (GLLMFGVPIMLAGLVWNIVAF). Topologically, residues 398–417 (HYLCIPTGGLLDTSYKYDTK) are extracellular. The chain crosses the membrane as a helical span at residues 418–438 (LVGIVIGGIVFFTTGFGLTYS). The Cytoplasmic portion of the chain corresponds to 439 to 454 (HLAWYQSEFLALEVRS). Residues 455 to 475 (VGSGIATTANWVANLVVSVSY) traverse the membrane as a helical segment. At 476 to 485 (LTELETLTPS) the chain is on the extracellular side. A helical transmembrane segment spans residues 486 to 506 (GTYGLYLGFSVVFFIFAVFCY). Residues 507–590 (PETKQLSIDE…NGAKRFPISR (84 aa)) lie on the Cytoplasmic side of the membrane.

The protein belongs to the major facilitator superfamily. Sugar transporter (TC 2.A.1.1) family.

Its subcellular location is the cell membrane. It catalyses the reaction myo-inositol(out) + H(+)(out) = myo-inositol(in) + H(+)(in). Functionally, major transporter for myo-inositol. Plays a role in the traversal of the host blood-brain barrier. This is Myo-inositol transporter 3C from Cryptococcus neoformans var. grubii serotype A (strain H99 / ATCC 208821 / CBS 10515 / FGSC 9487) (Filobasidiella neoformans var. grubii).